The primary structure comprises 442 residues: Trigger factor (442 aa).

The PPIase FKBP-type domain maps to Asn163–Asn248.

Belongs to the FKBP-type PPIase family. Tig subfamily.

It localises to the cytoplasm. It catalyses the reaction [protein]-peptidylproline (omega=180) = [protein]-peptidylproline (omega=0). Involved in protein export. Acts as a chaperone by maintaining the newly synthesized protein in an open conformation. Functions as a peptidyl-prolyl cis-trans isomerase. In Buchnera aphidicola subsp. Schizaphis graminum (strain Sg), this protein is Trigger factor.